A 275-amino-acid chain; its full sequence is NH(3)-dependent NAD(+) synthetase (275 aa).

47-54 (GISGGQDS) provides a ligand contact to ATP. Asp-53 lines the Mg(2+) pocket. Arg-141 is a deamido-NAD(+) binding site. Position 161 (Thr-161) interacts with ATP. Residue Glu-166 coordinates Mg(2+). Deamido-NAD(+) is bound by residues Lys-174 and Asp-181. The ATP site is built by Lys-190 and Thr-212. Position 261-262 (261-262 (HK)) interacts with deamido-NAD(+).

This sequence belongs to the NAD synthetase family. In terms of assembly, homodimer.

The enzyme catalyses deamido-NAD(+) + NH4(+) + ATP = AMP + diphosphate + NAD(+) + H(+). It participates in cofactor biosynthesis; NAD(+) biosynthesis; NAD(+) from deamido-NAD(+) (ammonia route): step 1/1. Catalyzes the ATP-dependent amidation of deamido-NAD to form NAD. Uses ammonia as a nitrogen source. This is NH(3)-dependent NAD(+) synthetase from Latilactobacillus sakei subsp. sakei (strain 23K) (Lactobacillus sakei subsp. sakei).